A 216-amino-acid chain; its full sequence is MKQDSRFPNLFILDHPLIQHKLTHMRDKDTSTRTFRELLREITLLMGYEITRNLPITTKRVETPLVEIDAPVIAGKKLAIVPVLRAGVGMSDGLLDLIPSARVGHIGVYRADDHRPVEYLVRLPDLEDRIFILCDPMVATGYSAVHAVDVLKRRNVPAANIMFVALVAAPEGVQVFQDAHPDVKLFVASLDSHLNEHAYIVPGLGDAGDRLFGTKN.

5-phospho-alpha-D-ribose 1-diphosphate-binding positions include Arg-85, Arg-110, and Asp-135–Ser-143. Uracil is bound by residues Ile-200 and Gly-205 to Ala-207. A 5-phospho-alpha-D-ribose 1-diphosphate-binding site is contributed by Asp-206.

This sequence belongs to the UPRTase family. The cofactor is Mg(2+).

The catalysed reaction is UMP + diphosphate = 5-phospho-alpha-D-ribose 1-diphosphate + uracil. The protein operates within pyrimidine metabolism; UMP biosynthesis via salvage pathway; UMP from uracil: step 1/1. Allosterically activated by GTP. Catalyzes the conversion of uracil and 5-phospho-alpha-D-ribose 1-diphosphate (PRPP) to UMP and diphosphate. The sequence is that of Uracil phosphoribosyltransferase from Burkholderia multivorans (strain ATCC 17616 / 249).